A 237-amino-acid polypeptide reads, in one-letter code: Ras modification protein ERF4 (237 aa).

This sequence belongs to the ERF4 family. Interacts with ERF2.

The protein localises to the endoplasmic reticulum membrane. In terms of biological role, the ERF2-SHR5 complex is a palmitoyltransferase specific for Ras proteins. Palmitoylates RAS2, which is required for its proper plasma membrane localization. In Saccharomyces cerevisiae (strain ATCC 204508 / S288c) (Baker's yeast), this protein is Ras modification protein ERF4 (SHR5).